The primary structure comprises 372 residues: MSETRPKTFFDISIGGKPAGRIVFELYSDVVPKTAENFLKLCEGNSGFAKSKPDIPLSYKGSIFHRVIKSFMCQFGDFTNFNGTGGESIYGEKFEDENFTLKHDKPFLLSMANAGANTNGSQCFITCVPTPHLDGKHVVFGEVIQGKRLVRTIENNATDEADKPAKEVKIEDCGVLPSDYTVPADAEATPTDAYGDNYEENITDDSKVDPNDVNSVLNAVEAVKEIGTKQFKEKNFEVALVKYEKSSQMLKQYFPQDLPEEDVKKIDALRVSLFLNIALVSLKSKNYSRTLSAATEALHADNTDDKSKAKALYRRGLAYYYTKNAEMAVTDLELATTYQPHDTAIIKALQDAKKAKKELIAKQKKSLSKMFS.

Residues Phe-9–Val-175 form the PPIase cyclophilin-type domain. TPR repeat units follow at residues Val-220–Tyr-253, Val-271–Asp-304, and Ala-309–Asp-342.

Belongs to the cyclophilin-type PPIase family. PPIase D subfamily.

Its subcellular location is the cytoplasm. It catalyses the reaction [protein]-peptidylproline (omega=180) = [protein]-peptidylproline (omega=0). In terms of biological role, PPIases accelerate the folding of proteins. It catalyzes the cis-trans isomerization of proline imidic peptide bonds in oligopeptides. The protein is Peptidyl-prolyl cis-trans isomerase D (CPR6) of Kluyveromyces lactis (strain ATCC 8585 / CBS 2359 / DSM 70799 / NBRC 1267 / NRRL Y-1140 / WM37) (Yeast).